We begin with the raw amino-acid sequence, 483 residues long: Myosin-binding protein H (483 aa).

Polar residues predominate over residues 1–15 (MTGKATSEASVSTPE). The segment at 1-78 (MTGKATSEAS…PEPPSEDVPS (78 aa)) is disordered. A phosphothreonine mark is found at T2, T6, and T26. Residues 41-66 (QEQAPEPQKPQAQDPAAPAASAMPAA) are compositionally biased toward low complexity. A Fibronectin type-III 1 domain is found at 79–174 (APLRLTLEDV…LDQPVHIQEI (96 aa)). The Ig-like C2-type 1 domain occupies 178 to 266 (PKIRVPRHLR…EGLEAKASID (89 aa)). One can recognise a Fibronectin type-III 2 domain in the interval 275–370 (PPSSIKLLDV…TKELAHIHKA (96 aa)). Positions 388-472 (PSFTQPLADH…INVLGEASVD (85 aa)) constitute an Ig-like C2-type 2 domain.

This sequence belongs to the immunoglobulin superfamily. MyBP family. In terms of tissue distribution, skeletal muscle. Expressed at low levels in heart ventricles.

Its function is as follows. Binds to myosin; probably involved in interaction with thick myofilaments in the A-band. The protein is Myosin-binding protein H (Mybph) of Mus musculus (Mouse).